Reading from the N-terminus, the 282-residue chain is MIYETAPAKINFTLDTLFKRNDGYHEIEMIMTTVDLNDRLTFHKRKDRKIVVEIEHNYVPSNHKNLAYRAAQLFIEQYQLKQGVTISIDKEIPVSAGLAGGSADAAATLRGLNRLFDIGASLEELAQLGSKIGTDIPFCIYNKTALCTGRGEKIEFLNKPPSAWVILAKPNLGISSPDIFKLINLDKRYDVHTKMCYEALENRDYQQLCQSLSNRLEPISVSKHPQIDKLKNNMLKSGADGALMSGSGPTVYGLARKESQAKNIYNAVNGCCNEVYLVRLLG.

Residue K9 is part of the active site. Position 93-103 (P93–A103) interacts with ATP. The active site involves D135.

The protein belongs to the GHMP kinase family. IspE subfamily.

The catalysed reaction is 4-CDP-2-C-methyl-D-erythritol + ATP = 4-CDP-2-C-methyl-D-erythritol 2-phosphate + ADP + H(+). Its function is as follows. Catalyzes the phosphorylation of the position 2 hydroxy group of 4-diphosphocytidyl-2C-methyl-D-erythritol. This is Putative 4-diphosphocytidyl-2-C-methyl-D-erythritol kinase from Staphylococcus aureus (strain bovine RF122 / ET3-1).